We begin with the raw amino-acid sequence, 246 residues long: Proteasome subunit alpha type-5 (246 aa).

The protein belongs to the peptidase T1A family. In terms of assembly, the 26S proteasome consists of a 20S proteasome core and two 19S regulatory subunits. The 20S proteasome core is composed of 28 subunits that are arranged in four stacked rings, resulting in a barrel-shaped structure. The two end rings are each formed by seven alpha subunits, and the two central rings are each formed by seven beta subunits. The catalytic chamber with the active sites is on the inside of the barrel.

It is found in the cytoplasm. The protein localises to the nucleus. Its function is as follows. The proteasome is a multicatalytic proteinase complex which is characterized by its ability to cleave peptides with Arg, Phe, Tyr, Leu, and Glu adjacent to the leaving group at neutral or slightly basic pH. The proteasome has an ATP-dependent proteolytic activity. The polypeptide is Proteasome subunit alpha type-5 (Trypanosoma brucei brucei).